We begin with the raw amino-acid sequence, 348 residues long: 11-beta-hydroxysteroid dehydrogenase A (348 aa).

A helical; Signal-anchor for type II membrane protein transmembrane segment spans residues 10–30 (LIAPPFTFFFLLFFLPPFQIF). Residues 13–26 (PPFTFFFLLFFLPP) carry the Proline-knob motif. Residues 54–80 (GASS…AARR), Asp105, and 132–135 (NAGI) contribute to the NADP(+) site. Ser184 provides a ligand contact to substrate. Tyr197 (proton acceptor) is an active-site residue. NADP(+) is bound by residues 197 to 201 (YNASK) and Lys201.

It belongs to the short-chain dehydrogenases/reductases (SDR) family. Expressed in seeds (at protein level). Not expressed in stem, leaf or root (at protein level).

It localises to the lipid droplet. Its subcellular location is the membrane. The catalysed reaction is an 11beta-hydroxysteroid + NADP(+) = an 11-oxosteroid + NADPH + H(+). The enzyme catalyses an 11beta-hydroxysteroid + NAD(+) = an 11-oxosteroid + NADH + H(+). It carries out the reaction corticosterone + NADP(+) = 11-dehydrocorticosterone + NADPH + H(+). It catalyses the reaction corticosterone + NAD(+) = 11-dehydrocorticosterone + NADH + H(+). The catalysed reaction is 17beta-estradiol + NADP(+) = estrone + NADPH + H(+). The enzyme catalyses 17beta-estradiol + NAD(+) = estrone + NADH + H(+). In terms of biological role, has dehydrogenase activity against corticosterone (11 beta-hydroxysteroid) and estradiol (17 beta-hydroxysteroid), with higher activity against estradiol. Possesses higher dehydrogenase activity with NADP(+) than NAD(+) regardless of the sterol substrate. May be involved in signal transduction regulated by various sterols. This Sesamum indicum (Oriental sesame) protein is 11-beta-hydroxysteroid dehydrogenase A.